Here is a 360-residue protein sequence, read N- to C-terminus: Ferredoxin--NADP reductase 1 (360 aa).

The FAD site is built by D43, Q51, Y56, A96, F141, D307, and S348.

The protein belongs to the ferredoxin--NADP reductase type 2 family. In terms of assembly, homodimer. FAD serves as cofactor.

The enzyme catalyses 2 reduced [2Fe-2S]-[ferredoxin] + NADP(+) + H(+) = 2 oxidized [2Fe-2S]-[ferredoxin] + NADPH. This is Ferredoxin--NADP reductase 1 from Cupriavidus taiwanensis (strain DSM 17343 / BCRC 17206 / CCUG 44338 / CIP 107171 / LMG 19424 / R1) (Ralstonia taiwanensis (strain LMG 19424)).